A 510-amino-acid chain; its full sequence is MAQEPPRKQKVVIVGAGPVGSLAALYAAARGDDVEVYELRGDLRDPTTIPLNFTKSINLALSERGISSLKGSNRDGMIEKILNDAIPMHGRMIHGRDDGKLWEAAQAYDVHGQAINSVDRSTLNNALLDELERTPNVKLFFNHKLTGADFQSNRAWFERRAPGDTPLPGSSNRVPEIEVSFDYMIGADGAHSASRYHMMKYSRVDYQQEYIDTLWCEFRIPPSDTGDFRISPNHLHIWPGKEFMFIALPSPDKSFTCTLFAPAAHYAQLESSPQKLFLSFDANFPGVSPDLITPEDLQEQFKENPHLPLISIKAKPHHYGSNIVIVGDAAHAILPFYGQGLNAGLEDIRVLFDFLDKHDAFDLNASLTARRESRRAAFQAYTDQRTADAHAINDLSKQNYLEMRWGVKTPLYKIRKSIEEALDLYVPSLGWKTQYARVSFSTQRYSDVVKVVHRQGRILGYGFASAVISSITIAGILAWKIPGRLSPLPALQSTVQLLGHVWTKISPKNT.

This sequence belongs to the aromatic-ring hydroxylase family. KMO subfamily. The cofactor is FAD.

It localises to the mitochondrion outer membrane. It catalyses the reaction L-kynurenine + NADPH + O2 + H(+) = 3-hydroxy-L-kynurenine + NADP(+) + H2O. It participates in cofactor biosynthesis; NAD(+) biosynthesis; quinolinate from L-kynurenine: step 1/3. Functionally, catalyzes the hydroxylation of L-kynurenine (L-Kyn) to form 3-hydroxy-L-kynurenine (L-3OHKyn). Required for synthesis of quinolinic acid. This chain is Kynurenine 3-monooxygenase (bna4), found in Aspergillus oryzae (strain ATCC 42149 / RIB 40) (Yellow koji mold).